The primary structure comprises 420 residues: 3-phosphoshikimate 1-carboxyvinyltransferase (420 aa).

3-phosphoshikimate-binding residues include Lys26, Ser27, and Arg31. Lys26 serves as a coordination point for phosphoenolpyruvate. 2 residues coordinate phosphoenolpyruvate: Gly97 and Arg125. The 3-phosphoshikimate site is built by Ser170, Ser171, Gln172, Asp297, Asn320, and Lys324. Gln172 contacts phosphoenolpyruvate. The active-site Proton acceptor is Asp297. Phosphoenolpyruvate-binding residues include Arg328, Arg375, and Lys400.

Belongs to the EPSP synthase family. Monomer.

It localises to the cytoplasm. The enzyme catalyses 3-phosphoshikimate + phosphoenolpyruvate = 5-O-(1-carboxyvinyl)-3-phosphoshikimate + phosphate. It participates in metabolic intermediate biosynthesis; chorismate biosynthesis; chorismate from D-erythrose 4-phosphate and phosphoenolpyruvate: step 6/7. Functionally, catalyzes the transfer of the enolpyruvyl moiety of phosphoenolpyruvate (PEP) to the 5-hydroxyl of shikimate-3-phosphate (S3P) to produce enolpyruvyl shikimate-3-phosphate and inorganic phosphate. This is 3-phosphoshikimate 1-carboxyvinyltransferase from Rhizobium etli (strain ATCC 51251 / DSM 11541 / JCM 21823 / NBRC 15573 / CFN 42).